The sequence spans 484 residues: Cysteine desulfurase, mitochondrial (484 aa).

Positions 29–42 are enriched in low complexity; that stretch reads LATSASTSSSTTTS. A disordered region spans residues 29 to 69; that stretch reads LATSASTSSSTTTSNAETGELHVSTPLDSPSVHPPDGSSIS. Residues 153 to 154, N233, Q261, and 281 to 283 each bind pyridoxal 5'-phosphate; these read AT and SSH. K284 bears the N6-(pyridoxal phosphate)lysine mark. T321 contributes to the pyridoxal 5'-phosphate binding site. The active-site Cysteine persulfide intermediate is C408. C408 contributes to the [2Fe-2S] cluster binding site.

This sequence belongs to the class-V pyridoxal-phosphate-dependent aminotransferase family. NifS/IscS subfamily. Pyridoxal 5'-phosphate is required as a cofactor.

The protein resides in the mitochondrion. It carries out the reaction (sulfur carrier)-H + L-cysteine = (sulfur carrier)-SH + L-alanine. Catalyzes the removal of elemental sulfur from cysteine to produce alanine. It supplies the inorganic sulfur for iron-sulfur (Fe-S) clusters. Plays a role in both tRNA-processing and mitochondrial metabolism. Involved in the 2-thio-modification of both 5-carboxymethylaminomethyl-2-thiouridine in mitochondrial tRNAs and 5-methoxycarbonylmethyl-2-thiouridine (mcm5s2U) in cytoplasmic tRNAs. The sequence is that of Cysteine desulfurase, mitochondrial from Candida maltosa (Yeast).